The chain runs to 142 residues: Transcriptional regulator MraZ (142 aa).

SpoVT-AbrB domains are found at residues 5 to 47 (EYPY…PLAS) and 76 to 119 (ANKA…NPER).

This sequence belongs to the MraZ family. As to quaternary structure, forms oligomers.

Its subcellular location is the cytoplasm. It is found in the nucleoid. This is Transcriptional regulator MraZ from Deinococcus geothermalis (strain DSM 11300 / CIP 105573 / AG-3a).